A 333-amino-acid chain; its full sequence is DNA-directed RNA polymerase subunit alpha (333 aa).

An alpha N-terminal domain (alpha-NTD) region spans residues 1–235 (MQTNLLKPKA…EQLAVFAQLE (235 aa)). The segment at 253-333 (FDPILLRPVD…NWPPQGLDKR (81 aa)) is alpha C-terminal domain (alpha-CTD).

Belongs to the RNA polymerase alpha chain family. In terms of assembly, homodimer. The RNAP catalytic core consists of 2 alpha, 1 beta, 1 beta' and 1 omega subunit. When a sigma factor is associated with the core the holoenzyme is formed, which can initiate transcription.

The catalysed reaction is RNA(n) + a ribonucleoside 5'-triphosphate = RNA(n+1) + diphosphate. In terms of biological role, DNA-dependent RNA polymerase catalyzes the transcription of DNA into RNA using the four ribonucleoside triphosphates as substrates. The protein is DNA-directed RNA polymerase subunit alpha of Methylibium petroleiphilum (strain ATCC BAA-1232 / LMG 22953 / PM1).